We begin with the raw amino-acid sequence, 633 residues long: uncharacterized protein (633 aa).

Positions 1–188 are disordered; the sequence is MNNRGGFSHP…GQSSFYNSSY (188 aa). 2 stretches are compositionally biased toward low complexity: residues 32–80 and 104–148; these read GQPQ…GGNN and NNGN…TNSR. Positions 152–178 are enriched in gly residues; the sequence is RGGSSRGGSSRGGNSGSSRGGSRGGYR. Residues 580 to 607 are a coiled coil; it reads KSKNWTVDQASDELKKLSKNLRLLVSKH. Residues 611 to 633 form a disordered region; it reads TKFQPPSADHTTQFEQDDEEEEN.

This is an uncharacterized protein from Dictyostelium discoideum (Social amoeba).